Reading from the N-terminus, the 362-residue chain is Glutamate 5-kinase (362 aa).

Lys-3 provides a ligand contact to ATP. Substrate-binding residues include Ser-43, Asp-128, and Asn-140. Residues 160–161 (TD) and 202–208 (TGGMRTK) contribute to the ATP site. A PUA domain is found at 267–348 (PGTILIDAGA…REIEPILGYS (82 aa)).

It belongs to the glutamate 5-kinase family.

Its subcellular location is the cytoplasm. It catalyses the reaction L-glutamate + ATP = L-glutamyl 5-phosphate + ADP. The protein operates within amino-acid biosynthesis; L-proline biosynthesis; L-glutamate 5-semialdehyde from L-glutamate: step 1/2. Its function is as follows. Catalyzes the transfer of a phosphate group to glutamate to form L-glutamate 5-phosphate. The sequence is that of Glutamate 5-kinase from Xanthomonas campestris pv. campestris (strain 8004).